A 215-amino-acid polypeptide reads, in one-letter code: Peptide methionine sulfoxide reductase MsrA (215 aa).

Residue Cys58 is part of the active site.

It belongs to the MsrA Met sulfoxide reductase family.

It catalyses the reaction L-methionyl-[protein] + [thioredoxin]-disulfide + H2O = L-methionyl-(S)-S-oxide-[protein] + [thioredoxin]-dithiol. The enzyme catalyses [thioredoxin]-disulfide + L-methionine + H2O = L-methionine (S)-S-oxide + [thioredoxin]-dithiol. Its function is as follows. Has an important function as a repair enzyme for proteins that have been inactivated by oxidation. Catalyzes the reversible oxidation-reduction of methionine sulfoxide in proteins to methionine. This Pseudomonas aeruginosa (strain LESB58) protein is Peptide methionine sulfoxide reductase MsrA.